Here is a 212-residue protein sequence, read N- to C-terminus: Pyrrolidone-carboxylate peptidase (212 aa).

Residues glutamate 80, cysteine 143, and histidine 165 contribute to the active site.

It belongs to the peptidase C15 family. Homotetramer.

Its subcellular location is the cytoplasm. The catalysed reaction is Release of an N-terminal pyroglutamyl group from a polypeptide, the second amino acid generally not being Pro.. Functionally, removes 5-oxoproline from various penultimate amino acid residues except L-proline. This Aliivibrio fischeri (strain MJ11) (Vibrio fischeri) protein is Pyrrolidone-carboxylate peptidase.